Reading from the N-terminus, the 342-residue chain is Succinylglutamate desuccinylase (342 aa).

Zn(2+)-binding residues include H63, E66, and H155. Residue E219 is part of the active site.

This sequence belongs to the AspA/AstE family. Succinylglutamate desuccinylase subfamily. It depends on Zn(2+) as a cofactor.

The catalysed reaction is N-succinyl-L-glutamate + H2O = L-glutamate + succinate. Its pathway is amino-acid degradation; L-arginine degradation via AST pathway; L-glutamate and succinate from L-arginine: step 5/5. Functionally, transforms N(2)-succinylglutamate into succinate and glutamate. This Vibrio parahaemolyticus serotype O3:K6 (strain RIMD 2210633) protein is Succinylglutamate desuccinylase.